The primary structure comprises 542 residues: Homeobox protein ceh-18 (542 aa).

Residues 243–252 (NTPTQPTASL) are compositionally biased toward polar residues. A disordered region spans residues 243–264 (NTPTQPTASLTPKKAENRPPVV). Residues 290–364 (DDRIDMNELE…LLKEWLADVE (75 aa)) enclose the POU-specific domain. Positions 421-480 (RRRKRTNLDMNQRNALDTFFALNPRPDHDKMTDIANSLELDRDVVRVWFCNRRQKMRRVD) form a DNA-binding region, homeobox. A disordered region spans residues 514 to 542 (LASCQASNDDSDGTSGSPDAPSNDGCSDL). Polar residues predominate over residues 517–530 (CQASNDDSDGTSGS).

The protein belongs to the POU transcription factor family. As to quaternary structure, interacts with akir-1. In terms of tissue distribution, expressed in the gonadal sheath cells that signal the oocyte, but not in the oocyte.

It is found in the nucleus. Functionally, directs gonadal sheath cell differentiation and function. Also directs gonad migration and plays a role in specifying the differentiated phenotypes of epidermal cells during postembryonic development. Plays a role in oogenesis, regulating a sheath cell signal that causes oocytes to maintain diakinesis arrest during meiosis. Negatively regulates oocyte maturation, ovulation and MAPK activation in oocytes when sperm are not available for fertilization. May be recruited by akir-1 to the promoter regions of antimicrobial peptide genes to control gene expression in response to fungal infection. The sequence is that of Homeobox protein ceh-18 from Caenorhabditis elegans.